A 498-amino-acid chain; its full sequence is Beta-amylase 5 (498 aa).

Residues D56, H96, and D104 each contribute to the substrate site. E189 (proton donor) is an active-site residue. Substrate is bound by residues K298, H303, and T345. E383 serves as the catalytic Proton acceptor. Residues 384–385 and R423 contribute to the substrate site; that span reads NA.

Belongs to the glycosyl hydrolase 14 family. Detected in phloem sieve elements.

It localises to the cytoplasm. The enzyme catalyses Hydrolysis of (1-&gt;4)-alpha-D-glucosidic linkages in polysaccharides so as to remove successive maltose units from the non-reducing ends of the chains.. In terms of biological role, beta-amylase activity. Major cytosolic beta-amylase isoform in rosette leaves and inflorescences stems. The protein is Beta-amylase 5 (BAM5) of Arabidopsis thaliana (Mouse-ear cress).